The primary structure comprises 313 residues: Potassium channel subfamily K member 6 (313 aa).

Residues 1-4 lie on the Cytoplasmic side of the membrane; it reads MRRG. The helical transmembrane segment at 5-25 threads the bilayer; the sequence is ALLASALAAYAGYLALGALLV. Residues Asn-79 and Asn-85 are each glycosylated (N-linked (GlcNAc...) asparagine). The pore-forming intramembrane region spans 90 to 115; that stretch reads AWDFASALFFASTLVTTVGYGYTTPL. Thr-106, Val-107, Gly-108, and Tyr-109 together coordinate K(+). The interval 106–111 is selectivity filter 1; it reads TVGYGY. The chain crosses the membrane as a helical span at residues 121-141; the sequence is AFSIVFALLGVPITMLLLTAS. The Cytoplasmic segment spans residues 142-172; that stretch reads AQRLSLLLTHAPLSWLSLHWGWPPQRAARWH. Residues 173 to 193 traverse the membrane as a helical segment; that stretch reads LVALLMVIVAIFFLVPAAVFA. The pore-forming intramembrane region spans 199–223; sequence WSFLDAFYFCFISLSTIGLGDYVPG. K(+)-binding residues include Thr-214, Ile-215, and Gly-216. The interval 214–219 is selectivity filter 2; the sequence is TIGLGD. The helical transmembrane segment at 236 to 256 threads the bilayer; it reads VLVTAYLFLGLVAMVLVLQTF. Residues 257–313 are Cytoplasmic-facing; the sequence is RRVSDLHGLTELILLPDPDPASLSQDEDDQVAVLDARTDLHQHLSAASHADYASIPR. 2 consecutive short sequence motifs (lysosomal targeting signal) follow at residues 282–290 and 308–312; these read DEDDQVAVL and YASIP.

The protein belongs to the two pore domain potassium channel (TC 1.A.1.8) family. In terms of assembly, homodimer; disulfide-linked. In terms of processing, N-glycosylation is necessary for targeting to lysosomes.

Its subcellular location is the late endosome membrane. The protein resides in the lysosome membrane. The catalysed reaction is K(+)(in) = K(+)(out). K(+) channel that conducts outward rectifying currents at the membranes of the endolysosomal system. Active in lysosomes where it regulates lysosome numbers and size. In macrophages, enables K(+) efflux coupled to ATP-induced NLRP3 inflammasome activation upon bacterial infection. Cooperates with ATP-gated P2RX7 to activate NLRP3 inflammasome, with P2RX7 conducting Ca(2+) and Na(+) influx that sets the membrane potential for K(+) efflux. This Mus musculus (Mouse) protein is Potassium channel subfamily K member 6.